A 1120-amino-acid polypeptide reads, in one-letter code: Transcription-repair-coupling factor (1120 aa).

Positions 591–756 (DLTNGMLMDR…LTGLKELSII (166 aa)) constitute a Helicase ATP-binding domain. ATP is bound at residue 604-611 (GDVGFGKT). Positions 709–712 (DEEQ) match the DEEQ box motif. One can recognise a Helicase C-terminal domain in the interval 777 to 933 (IIRDALLREH…TIASHDADLR (157 aa)).

This sequence in the N-terminal section; belongs to the UvrB family. It in the C-terminal section; belongs to the helicase family. RecG subfamily.

It localises to the cytoplasm. Its function is as follows. Couples transcription and DNA repair by recognizing RNA polymerase (RNAP) stalled at DNA lesions. Mediates ATP-dependent release of RNAP and its truncated transcript from the DNA, and recruitment of nucleotide excision repair machinery to the damaged site. In Rickettsia typhi (strain ATCC VR-144 / Wilmington), this protein is Transcription-repair-coupling factor.